The chain runs to 1084 residues: TNF receptor-associated factor family protein DDB_G0272098 (1084 aa).

Residues 19–103 form the LIM zinc-binding domain; it reads YYCPDCGELL…KNRYYETKNF (85 aa). 2 consecutive TRAF-type zinc fingers follow at residues 122-190 and 191-248; these read KHIK…IDHE and IHLS…YNMS. A coiled-coil region spans residues 265 to 321; that stretch reads IEEQNQDIKELHNFIENHLSKKFIDLDTIVNIQKYLIKNKNQKISQLTEIIKRVDNS. Disordered stretches follow at residues 348–392, 490–523, 537–656, and 709–897; these read YKNS…NINE, IRQQ…NTTI, NNNI…KDGL, and SIVE…NDDD. Composition is skewed to low complexity over residues 349 to 375, 492 to 509, 537 to 549, and 556 to 570; these read KNSN…TNEN, QQQQ…QQQQ, NNNI…NNNK, and ITAA…TTST. Residues 489 to 553 are a coiled coil; the sequence is LIRQQQQQQQ…NNNNNKNNDD (65 aa). Over residues 571–586 the composition is skewed to polar residues; it reads HTILNGTNNEASMTDI. Residues 587–637 are compositionally biased toward low complexity; it reads NETTSTTTTAETTEATASESTEESNNTAETTTTTTTTTTTITTAAETVNST. The segment covering 644–656 has biased composition (basic and acidic residues); sequence TSEKVEEKGKDGL. Positions 735 to 852 form a coiled coil; sequence NGNENENENE…NNNNNNNENV (118 aa). The span at 739–757 shows a compositional bias: acidic residues; sequence NENENENENENENENENEN. Polar residues predominate over residues 774 to 785; that stretch reads SNINTSNDTEPT. Residues 790 to 799 show a composition bias toward basic and acidic residues; sequence EDIKKNKENE. Over residues 809–849 the composition is skewed to low complexity; it reads NNNIKSVEDTNNNNNNNNNNNNNNNNNNNNNNNNNNNNNNN. Basic and acidic residues-rich tracts occupy residues 853–864 and 875–892; these read YDIKKDRNRENV and ENGK…SEDK. The 134-residue stretch at 909–1042 folds into the MATH domain; that stretch reads IFRNQILFKD…DNCFIVNLEV (134 aa). Residues 1056–1084 form a disordered region; it reads LLQKSSPPAATTTTTTSSSSSKTTPKTKR. Residues 1059 to 1084 show a composition bias toward low complexity; that stretch reads KSSPPAATTTTTTSSSSSKTTPKTKR.

It belongs to the TNF receptor-associated factor family.

Its subcellular location is the cytoplasm. Probable adapter protein and signal transducer that links members of the tumor necrosis factor receptor family to different signaling pathways by association with the receptor cytoplasmic domain and kinases. The polypeptide is TNF receptor-associated factor family protein DDB_G0272098 (Dictyostelium discoideum (Social amoeba)).